Here is a 616-residue protein sequence, read N- to C-terminus: Sodium- and chloride-dependent transporter XTRP3 (616 aa).

Positions 1–11 are enriched in basic residues; the sequence is MRLAIKRRASR. Residues 1–26 are disordered; sequence MRLAIKRRASRGQRPGPDEKRARDME. The Cytoplasmic portion of the chain corresponds to 1 to 37; sequence MRLAIKRRASRGQRPGPDEKRARDMEKARPQWGNPLQ. The segment covering 16-26 has biased composition (basic and acidic residues); that stretch reads GPDEKRARDME. Residues 38 to 58 traverse the membrane as a helical segment; the sequence is FVFACISYAVGLGNVWRFPYL. Over 59–66 the chain is Extracellular; that stretch reads CQMYGGGS. A helical transmembrane segment spans residues 67–87; sequence FLVPYLIMLIVEGMPLLYLEL. The Cytoplasmic portion of the chain corresponds to 88 to 103; that stretch reads AVGQRMRQGSIGAWRT. A helical transmembrane segment spans residues 104 to 124; sequence ISPYLSGVGVASVVVSFFLSM. Residues 125-189 are Extracellular-facing; the sequence is YYNVINAWGF…ISPSIQENGG (65 aa). An N-linked (GlcNAc...) asparagine glycan is attached at Asn-155. A helical transmembrane segment spans residues 190–210; the sequence is VQWEPALCLTLAWLMVYLCIL. Over 211–218 the chain is Cytoplasmic; that stretch reads RGTESTGK. The helical transmembrane segment at 219–239 threads the bilayer; it reads VVYFTALMPYCVLIIYLVRGL. Residues 240–265 lie on the Extracellular side of the membrane; the sequence is TLHGATNGLMYMFTPKIEQLANPKAW. The helical transmembrane segment at 266 to 286 threads the bilayer; sequence INAATQIFFSLGLGFGSLIAF. Over 287 to 300 the chain is Cytoplasmic; that stretch reads ASYNEPSNDCQKHA. A helical membrane pass occupies residues 301-321; that stretch reads VIVSVINSSTSIFASIVTFSI. The Extracellular segment spans residues 322–413; the sequence is YGFKATFNYE…EAIKNMEVSQ (92 aa). The N-linked (GlcNAc...) asparagine glycan is linked to Asn-381. Residues 414–434 form a helical membrane-spanning segment; the sequence is LWSVLYFFMLLMLGMGSMLGN. Over 435–455 the chain is Cytoplasmic; the sequence is TAAILTPLTDSKVISSYLPKE. The chain crosses the membrane as a helical span at residues 456–476; sequence AISGLVCLINCAVGMVFTMEA. At 477 to 489 the chain is on the extracellular side; sequence GNYWFDIFNDYAA. A helical transmembrane segment spans residues 490-510; that stretch reads TLSLLLIVLVETIAVCYVYGL. Residues 511–533 lie on the Cytoplasmic side of the membrane; sequence RRFESDLRAMTGRPLNWYWKAMW. A helical transmembrane segment spans residues 534-554; that stretch reads AFVSPLLIIGLFIFYLSDYIL. The Extracellular segment spans residues 555–578; that stretch reads TGTLQYQAWDATQGQLVTKDYPPH. The helical transmembrane segment at 579–599 threads the bilayer; sequence ALAVIGLLVASSTMCIPLVAL. The Cytoplasmic segment spans residues 600–616; sequence GTFIRNRLKRGGSSPVA.

The protein belongs to the sodium:neurotransmitter symporter (SNF) (TC 2.A.22) family. SLC6A20 subfamily. As to expression, highly expressed in epithelial cells of duodenum, jejunum, ileum, stomach, cecum, colon and kidney proximal tubule. Also expressed in the choroid plexus, microglia and meniges of the brain and in the ovary.

It localises to the apical cell membrane. The catalysed reaction is L-proline(out) + chloride(out) + 2 Na(+)(out) = L-proline(in) + chloride(in) + 2 Na(+)(in). It catalyses the reaction 4-hydroxy-L-proline(out) + chloride(out) + 2 Na(+)(out) = 4-hydroxy-L-proline(in) + chloride(in) + 2 Na(+)(in). It carries out the reaction 2-methyl-2-(methylamino)propanoate(out) + chloride(out) + 2 Na(+)(out) = 2-methyl-2-(methylamino)propanoate(in) + chloride(in) + 2 Na(+)(in). The enzyme catalyses L-pipecolate(out) + chloride(out) + 2 Na(+)(out) = L-pipecolate(in) + chloride(in) + 2 Na(+)(in). The catalysed reaction is glycine betaine(out) + chloride(out) + 2 Na(+)(out) = glycine betaine(in) + chloride(in) + 2 Na(+)(in). It catalyses the reaction glycine(out) + chloride(out) + 2 Na(+)(out) = glycine(in) + chloride(in) + 2 Na(+)(in). Its function is as follows. Mediates the Na(+)- and Cl(-)-dependent uptake of imino acids such as L-proline, N-methyl-L-proline and pipecolate as well as N-methylated amino acids. Also transports glycine, regulates proline and glycine homeostasis in the brain playing a role in the modulation of NMDAR currents. In Rattus norvegicus (Rat), this protein is Sodium- and chloride-dependent transporter XTRP3.